The sequence spans 506 residues: UDP-N-acetylmuramoyl-L-alanyl-D-glutamate--2,6-diaminopimelate ligase (506 aa).

Ser38 is a UDP-N-acetyl-alpha-D-muramoyl-L-alanyl-D-glutamate binding site. 124–130 (GTNGKTS) contributes to the ATP binding site. UDP-N-acetyl-alpha-D-muramoyl-L-alanyl-D-glutamate contacts are provided by residues 166-167 (TT), Ser193, and Arg201. The residue at position 233 (Lys233) is an N6-carboxylysine. Residues Arg401, 425 to 428 (DNPR), Gly477, and Glu481 contribute to the meso-2,6-diaminopimelate site. A Meso-diaminopimelate recognition motif motif is present at residues 425-428 (DNPR).

The protein belongs to the MurCDEF family. MurE subfamily. The cofactor is Mg(2+). Carboxylation is probably crucial for Mg(2+) binding and, consequently, for the gamma-phosphate positioning of ATP.

The protein resides in the cytoplasm. It carries out the reaction UDP-N-acetyl-alpha-D-muramoyl-L-alanyl-D-glutamate + meso-2,6-diaminopimelate + ATP = UDP-N-acetyl-alpha-D-muramoyl-L-alanyl-gamma-D-glutamyl-meso-2,6-diaminopimelate + ADP + phosphate + H(+). The protein operates within cell wall biogenesis; peptidoglycan biosynthesis. Functionally, catalyzes the addition of meso-diaminopimelic acid to the nucleotide precursor UDP-N-acetylmuramoyl-L-alanyl-D-glutamate (UMAG) in the biosynthesis of bacterial cell-wall peptidoglycan. This chain is UDP-N-acetylmuramoyl-L-alanyl-D-glutamate--2,6-diaminopimelate ligase, found in Leptospira interrogans serogroup Icterohaemorrhagiae serovar copenhageni (strain Fiocruz L1-130).